A 155-amino-acid chain; its full sequence is Small ribosomal subunit protein uS7cz/uS7cy (155 aa).

It belongs to the universal ribosomal protein uS7 family. In terms of assembly, part of the 30S ribosomal subunit.

It is found in the plastid. Functionally, one of the primary rRNA binding proteins, it binds directly to 16S rRNA where it nucleates assembly of the head domain of the 30S subunit. This is Small ribosomal subunit protein uS7cz/uS7cy (rps7-A) from Epifagus virginiana (Beechdrops).